The sequence spans 239 residues: Probable transcriptional regulatory protein ABO_1803 (239 aa).

This sequence belongs to the TACO1 family.

Its subcellular location is the cytoplasm. The sequence is that of Probable transcriptional regulatory protein ABO_1803 from Alcanivorax borkumensis (strain ATCC 700651 / DSM 11573 / NCIMB 13689 / SK2).